A 419-amino-acid chain; its full sequence is MQLLNFGLLLLPFVAGDLAPQPEPLLAGPSDVVPGQYIVTLKEGLTSAQIRDHKKWVSSVHRANLDSFAAGASGVETEGIMKHFHIHDLNMYSGGFDEKTVEDLSRNPYVKSVHPDQHVYLAKTVTQRQARWGLGYMSSKGKPVPLHSTLVDYSYDDKAGEGVWAYVLDTGINVNHVEFEGRGILGHNAIPNKPHTDEFGHGTYVAGIIAGKTYGVAKKANVVSAKAFDTGSSTYNYILETYDWIVRNITDSNRKNKAVINLSISGAKYQPFDDAVEKAFKAGITTVVAAGNDGKDAKNNTPASSPNAITVGAVRWENTRPSFSNYGKLVDIWAPGELIKSCWKGGNNATSTQSGTSAASPHVAGLVAYLMSIENLPSPSAVTARVLNLTIPNLVKDAKDSPNRVAYNGIQERKFKLPK.

Residues 1–16 form the signal peptide; sequence MQLLNFGLLLLPFVAG. Positions 17–122 are excised as a propeptide; sequence DLAPQPEPLL…VHPDQHVYLA (106 aa). One can recognise an Inhibitor I9 domain in the interval 36-122; it reads QYIVTLKEGL…VHPDQHVYLA (87 aa). Residues 131 to 419 enclose the Peptidase S8 domain; sequence RWGLGYMSSK…IQERKFKLPK (289 aa). Residues aspartate 169 and histidine 201 each act as charge relay system in the active site. N-linked (GlcNAc...) asparagine glycans are attached at residues asparagine 248, asparagine 261, and asparagine 348. Catalysis depends on serine 357, which acts as the Charge relay system. The N-linked (GlcNAc...) asparagine glycan is linked to asparagine 388.

The protein belongs to the peptidase S8 family.

The protein resides in the secreted. Secreted subtilisin-like serine protease with keratinolytic activity that contributes to pathogenicity. The sequence is that of Subtilisin-like protease 2 (SUB2) from Arthroderma benhamiae (Trichophyton mentagrophytes).